Reading from the N-terminus, the 154-residue chain is 6,7-dimethyl-8-ribityllumazine synthase (154 aa).

Residues Phe22, 57–59, and 81–83 contribute to the 5-amino-6-(D-ribitylamino)uracil site; these read AYE and AVI. 86–87 provides a ligand contact to (2S)-2-hydroxy-3-oxobutyl phosphate; sequence GT. The active-site Proton donor is His89. Phe114 contacts 5-amino-6-(D-ribitylamino)uracil. A (2S)-2-hydroxy-3-oxobutyl phosphate-binding site is contributed by Arg128.

Belongs to the DMRL synthase family. Forms an icosahedral capsid composed of 60 subunits, arranged as a dodecamer of pentamers.

The catalysed reaction is (2S)-2-hydroxy-3-oxobutyl phosphate + 5-amino-6-(D-ribitylamino)uracil = 6,7-dimethyl-8-(1-D-ribityl)lumazine + phosphate + 2 H2O + H(+). It participates in cofactor biosynthesis; riboflavin biosynthesis; riboflavin from 2-hydroxy-3-oxobutyl phosphate and 5-amino-6-(D-ribitylamino)uracil: step 1/2. Functionally, catalyzes the formation of 6,7-dimethyl-8-ribityllumazine by condensation of 5-amino-6-(D-ribitylamino)uracil with 3,4-dihydroxy-2-butanone 4-phosphate. This is the penultimate step in the biosynthesis of riboflavin. In Idiomarina loihiensis (strain ATCC BAA-735 / DSM 15497 / L2-TR), this protein is 6,7-dimethyl-8-ribityllumazine synthase.